A 544-amino-acid chain; its full sequence is Serine/threonine-protein kinase PAK 1 (544 aa).

The tract at residues 1–77 is disordered; it reads MSNNGLDIQD…KEKERPEISL (77 aa). S2 is modified (N-acetylserine). The residue at position 21 (S21) is a Phosphoserine; by PKB and autocatalysis. The segment covering 68–77 has biased composition (basic and acidic residues); sequence KEKERPEISL. Positions 70 to 140 are autoregulatory region; sequence KERPEISLPS…YNSKKTSNSQ (71 aa). Residues 75–88 form the CRIB domain; the sequence is ISLPSDFEHTIHVG. The segment at 75–105 is GTPase-binding; sequence ISLPSDFEHTIHVGFDAVTGEFTGMPEQWAR. T84 is modified (phosphothreonine; by OXSR1). Position 115 is a phosphoserine (S115). A phosphotyrosine mark is found at Y131 and Y142. A phosphoserine; by autocatalysis mark is found at S144 and S149. Y153 carries the post-translational modification Phosphotyrosine; by JAK2. Residues 161–193 are disordered; it reads VKAVSETPAVPPVSEDEDDDDDGTPPPVIAPRP. S174 bears the Phosphoserine mark. The span at 174 to 183 shows a compositional bias: acidic residues; sequence SEDEDDDDDG. T184 is modified (phosphothreonine). S198 is modified (phosphoserine; by autocatalysis). Y200 carries the post-translational modification Phosphotyrosine; by JAK2. Residue S203 is modified to Phosphoserine; by autocatalysis. Phosphothreonine occurs at positions 211 and 218. Residues 212–250 are disordered; it reads PTRDVATSPISPTENNTTPPDALTRNTEKQKKKPKMSDE. S219 and S222 each carry phosphoserine. Residues 219-230 show a composition bias toward polar residues; sequence SPISPTENNTTP. T224, T228, and T229 each carry phosphothreonine. Residues 269–520 enclose the Protein kinase domain; sequence YTRFEKIGQG…AKELLQHQFL (252 aa). Residue 275–283 coordinates ATP; it reads IGQGASGTV. Y284 carries the phosphotyrosine; by JAK2 modification. Residue K298 coordinates ATP. The active-site Proton acceptor is the D388. Phosphothreonine; by autocatalysis, BRSK2 and PDPK1 is present on T422.

It belongs to the protein kinase superfamily. STE Ser/Thr protein kinase family. STE20 subfamily. As to quaternary structure, homodimer in its autoinhibited state. Active as monomer. Interacts with GIT1. Component of cytoplasmic complexes, which also contains PXN, ARHGEF7 and GIT1. Interacts with NISCH. Interacts with DVL1; mediates the formation of a DVL1, MUSK and PAK1 ternary complex involved in AChR clustering. Binds to the caspase-cleaved p110 isoform of CDC2L1 and CDC2L2, p110C, but not the full-length proteins. Interacts with ARHGEF7. Interacts tightly with GTP-bound but not GDP-bound CDC42/P21 and RAC1. Probably found in a ternary complex composed of DSCAM, PAK1 and RAC1. Interacts with DSCAM (via cytoplasmic domain); the interaction is direct and enhanced in presence of RAC1. Interacts with SCRIB. Interacts with PDPK1. Interacts (via kinase domain) with RAF1. Interacts with NCK1 and NCK2. Interacts with TBCB. Interacts with BRSK2. Interacts with SNAI1. Interacts with CIB1 (via N-terminal region); the interaction is direct, promotes PAK1 activity and occurs in a calcium-dependent manner. Interacts with INPP5K. Interacts with gamma-tubulin. Interacts with RHOU; the interaction promotes PAK1 activation. Requires Mg(2+) as cofactor. Post-translationally, autophosphorylated in trans, meaning that in a dimer, one kinase molecule phosphorylates the other one. Activated by autophosphorylation at Thr-422 in response to a conformation change, triggered by interaction with GTP-bound CDC42 or RAC1. Activated by phosphorylation at Thr-422 by BRSK2 and by PDPK1. Phosphorylated by JAK2 in response to PRL; this increases PAK1 kinase activity. Phosphorylated at Ser-21 by PKB/AKT; this reduces interaction with NCK1 and association with focal adhesion sites. Upon DNA damage, phosphorylated at Thr-211 and translocates to the nucleoplasm. Phosphorylated at tyrosine residues, which can be enhanced by NTN1.

The protein resides in the cytoplasm. It localises to the cell junction. Its subcellular location is the focal adhesion. It is found in the cell projection. The protein localises to the lamellipodium. The protein resides in the cell membrane. It localises to the ruffle membrane. Its subcellular location is the invadopodium. It is found in the nucleus. The protein localises to the nucleoplasm. The protein resides in the chromosome. It localises to the cytoskeleton. Its subcellular location is the microtubule organizing center. It is found in the centrosome. It carries out the reaction L-seryl-[protein] + ATP = O-phospho-L-seryl-[protein] + ADP + H(+). It catalyses the reaction L-threonyl-[protein] + ATP = O-phospho-L-threonyl-[protein] + ADP + H(+). With respect to regulation, phosphorylation of Thr-84 by OXSR1 inhibits activation. Activated by binding small G proteins. Binding of GTP-bound CDC42 or RAC1 to the autoregulatory region releases monomers from the autoinhibited dimer, and enables activation by phosphorylation of Thr-422. Functionally, protein kinase involved in intracellular signaling pathways downstream of integrins and receptor-type kinases that plays an important role in cytoskeleton dynamics, in cell adhesion, migration, proliferation, apoptosis, mitosis, and in vesicle-mediated transport processes. Can directly phosphorylate BAD and protects cells against apoptosis. Activated by interaction with CDC42 and RAC1. Functions as a GTPase effector that links the Rho-related GTPases CDC42 and RAC1 to the JNK MAP kinase pathway. Phosphorylates and activates MAP2K1, and thereby mediates activation of downstream MAP kinases. Involved in the reorganization of the actin cytoskeleton, actin stress fibers and of focal adhesion complexes. Phosphorylates the tubulin chaperone TBCB and thereby plays a role in the regulation of microtubule biogenesis and organization of the tubulin cytoskeleton. Plays a role in the regulation of insulin secretion in response to elevated glucose levels. Part of a ternary complex that contains PAK1, DVL1 and MUSK that is important for MUSK-dependent regulation of AChR clustering during the formation of the neuromuscular junction (NMJ). Activity is inhibited in cells undergoing apoptosis, potentially due to binding of CDC2L1 and CDC2L2. Phosphorylates MYL9/MLC2. Phosphorylates RAF1 at 'Ser-338' and 'Ser-339' resulting in: activation of RAF1, stimulation of RAF1 translocation to mitochondria, phosphorylation of BAD by RAF1, and RAF1 binding to BCL2. Phosphorylates SNAI1 at 'Ser-246' promoting its transcriptional repressor activity by increasing its accumulation in the nucleus. In podocytes, promotes NR3C2 nuclear localization. Required for atypical chemokine receptor ACKR2-induced phosphorylation of LIMK1 and cofilin (CFL1) and for the up-regulation of ACKR2 from endosomal compartment to cell membrane, increasing its efficiency in chemokine uptake and degradation. In synapses, seems to mediate the regulation of F-actin cluster formation performed by SHANK3, maybe through CFL1 phosphorylation and inactivation. Plays a role in RUFY3-mediated facilitating gastric cancer cells migration and invasion. In response to DNA damage, phosphorylates MORC2 which activates its ATPase activity and facilitates chromatin remodeling. In neurons, plays a crucial role in regulating GABA(A) receptor synaptic stability and hence GABAergic inhibitory synaptic transmission through its role in F-actin stabilization. In hippocampal neurons, necessary for the formation of dendritic spines and excitatory synapses; this function is dependent on kinase activity and may be exerted by the regulation of actomyosin contractility through the phosphorylation of myosin II regulatory light chain (MLC). Along with GIT1, positively regulates microtubule nucleation during interphase. Phosphorylates FXR1, promoting its localization to stress granules and activity. Phosphorylates ILK on 'Thr-173' and 'Ser-246', promoting nuclear export of ILK. This is Serine/threonine-protein kinase PAK 1 from Bos taurus (Bovine).